The primary structure comprises 111 residues: Mitochondrial import inner membrane translocase subunit Tim10B (111 aa).

The short motif at 24–48 (CFNACARDYTTSTLTKDEGSCVSQC) is the Twin CX3C motif element. 2 disulfides stabilise this stretch: cysteine 24/cysteine 48 and cysteine 28/cysteine 44. The disordered stretch occupies residues 73 to 111 (KQGEQSPTEAIKSAKPEPAVPAPEATPVETTPVIEENKQ). The span at 94–105 (APEATPVETTPV) shows a compositional bias: low complexity.

It belongs to the small Tim family. As to quaternary structure, component of the TIM22 complex, whose core is composed of tim-22, associated with peripheral protein tin-9.2/tim-10b and the 70 kDa heterohexamer. In most cases, the 70 kDa complex is composed of TIMM9 and TIMM10.

The protein resides in the mitochondrion inner membrane. In terms of biological role, component of the TIM22 complex, a complex that mediates the import and insertion of multi-pass transmembrane proteins into the mitochondrial inner membrane. The TIM22 complex forms a twin-pore translocase that uses the membrane potential as the external driving force. In the TIM22 complex, it may act as a docking point for the soluble 70 kDa complex that guides the target proteins in transit through the aqueous mitochondrial intermembrane space. This Caenorhabditis elegans protein is Mitochondrial import inner membrane translocase subunit Tim10B (tin-9.2).